Reading from the N-terminus, the 356-residue chain is Peptide chain release factor 1 (356 aa).

Residue Gln-235 is modified to N5-methylglutamine.

It belongs to the prokaryotic/mitochondrial release factor family. Methylated by PrmC. Methylation increases the termination efficiency of RF1.

Its subcellular location is the cytoplasm. Its function is as follows. Peptide chain release factor 1 directs the termination of translation in response to the peptide chain termination codons UAG and UAA. The protein is Peptide chain release factor 1 of Hydrogenobaculum sp. (strain Y04AAS1).